Here is a 255-residue protein sequence, read N- to C-terminus: Indole-3-glycerol phosphate synthase (255 aa).

The protein belongs to the TrpC family.

It catalyses the reaction 1-(2-carboxyphenylamino)-1-deoxy-D-ribulose 5-phosphate + H(+) = (1S,2R)-1-C-(indol-3-yl)glycerol 3-phosphate + CO2 + H2O. It functions in the pathway amino-acid biosynthesis; L-tryptophan biosynthesis; L-tryptophan from chorismate: step 4/5. The sequence is that of Indole-3-glycerol phosphate synthase from Streptococcus pneumoniae (strain Hungary19A-6).